Reading from the N-terminus, the 130-residue chain is Anti-adapter protein IraD (130 aa).

Belongs to the GpW/Gp25 family. IraD subfamily. In terms of assembly, interacts with RssB.

The protein resides in the cytoplasm. Inhibits RpoS proteolysis by regulating RssB activity, thereby increasing the stability of the sigma stress factor RpoS during oxidative stress. Its effect on RpoS stability is due to its interaction with RssB, which probably blocks the interaction of RssB with RpoS, and the consequent delivery of the RssB-RpoS complex to the ClpXP protein degradation pathway. The polypeptide is Anti-adapter protein IraD (Escherichia coli O157:H7).